The chain runs to 501 residues: Armadillo repeat-containing protein 6 (501 aa).

Serine 64 carries the post-translational modification Phosphoserine. ARM repeat units follow at residues 220–264 (GVLP…HAHN), 274–318 (KGLK…DLGG), 319–369 (LSIL…RAGG), and 370–412 (TESI…VEGG). At histidine 263 the chain carries Pros-methylhistidine.

The protein belongs to the ARMC6 family. Methylated at His-263 by METTL9.

This Homo sapiens (Human) protein is Armadillo repeat-containing protein 6 (ARMC6).